The sequence spans 822 residues: MTGLEEDQEFDFDFLFEFNQSDEGAAAAGATAERYSYATTGISSALPLPTAPPTLPAPCHDQQASAAGISAVGSAGHPAGYAGAVDGGPSGYFLPSGGVRPNGAPALESPRIEITSYLGLHHNNGQFFHDVAVEDVLPNPRRSPSTATLSLPNLEAYRDPSCLSPASSLSSRSCNSEASSYESSFSYPYASPQTSPWQSPCVSPKTTDPEEGFPRGLGACSLLGSPRHSPSTSPRTSVTEESWLGARTSRPSSPCNKRKYGLNGRQLFCSPHASPTPSPHSSPRVSVTDDTWLGNTTQYTSSAIVAAINALSTDSSLDLGDGVPVKARKTALDHSPSLALKVEPAAEDLGATPPTSDFPPEEFPPFQHIRKGAFCDQYLSVPQHPYPWARPRSPTPYASPSLPALDWQLPSHSGPYELRIEVQPKSHHRAHYETEGSRGAVKASAGGHPSVQLHGYVESEPLTLQLFIGTADDRLLRPHAFYQVHRITGKTVSTTSHEAVLSNTKVLEIPLLPENNMRAIIDCAGILKLRNSDIELRKGETDIGRKNTRVRLVFRVHIPQPNGRTLSLQVASNPIECSQRSAQELPLVEKQSAASCPVLGGKRMVLTGHNFLQDSKVVFVEKAPDGHHIWEMEAKTDGDLCKPNSLVVEIPPFRNQRITSPVQVNFYVCNGKRKRSQYQHFTYLPANAPVIKTEPSDDYEPALTCGPVSQGLNPLTKPCYGPPLALPPDPSSCLVAGFPPCPQRSAVMSPPPSASPKLHDLSCAPYSKGMAGPGHLGLQRPAGGVLGGQEAPRPGGPHPGAPQLHPLNLSQSIVTRLTEPQP.

A calcineurin-binding region spans residues 110-115; it reads PRIEIT. The tract at residues 118 to 210 is transactivation domain A (TAD-A); sequence LGLHHNNGQF…CVSPKTTDPE (93 aa). Residues 192–206 show a composition bias toward polar residues; that stretch reads PQTSPWQSPCVSPKT. Positions 192–289 are disordered; the sequence is PQTSPWQSPC…HSSPRVSVTD (98 aa). Tandem repeats lie at residues 195 to 211 and 225 to 241. The 3 X SP repeats stretch occupies residues 195 to 290; sequence SPWQSPCVSP…SSPRVSVTDD (96 aa). Residues Ser225 and Ser229 each carry the phosphoserine modification. Positions 225–242 are enriched in low complexity; that stretch reads SPRHSPSTSPRTSVTEES. Ser237 is modified (phosphoserine; by PKA). A Nuclear localization signal motif is present at residues 257 to 259; that stretch reads KRK. The stretch at 274–290 is repeat 3; it reads SPTPSPHSSPRVSVTDD. Ser286 is subject to Phosphoserine; by PKA. A Nuclear export signal motif is present at residues 302–313; that stretch reads SAIVAAINALST. The region spanning 400–582 is the RHD domain; the sequence is PSLPALDWQL…NPIECSQRSA (183 aa). A DNA-binding region spans residues 429-436; sequence RAHYETEG. The Nuclear localization signal signature appears at 672–674; sequence KRK. Residues 772-822 form a disordered region; it reads GPGHLGLQRPAGGVLGGQEAPRPGGPHPGAPQLHPLNLSQSIVTRLTEPQP. Polar residues predominate over residues 808 to 822; that stretch reads NLSQSIVTRLTEPQP.

Member of the multicomponent NFATC transcription complex that consists of at least two components, a pre-existing cytoplasmic component NFATC2 and an inducible nuclear component NFATC1. Other members such as NFATC4, NFATC3 or members of the activating protein-1 family, MAF, GATA4 and Cbp/p300 can also bind the complex. NFATC proteins bind to DNA as monomers. Interacts with HOMER2 and HOMER3; this interaction may compete with calcineurin/PPP3CA-binding and hence prevent NFATC1 dephosphorylation and activation. Interacts with TLE6/GRG6. Phosphorylated by NFATC-kinase and GSK3B; phosphorylation induces NFATC1 nuclear exit and dephosphorylation by calcineurin promotes nuclear import. Phosphorylation by PKA and DYRK2 negatively modulates nuclear accumulation, and promotes subsequent phosphorylation by GSK3B or casein kinase 1.

Its subcellular location is the cytoplasm. It localises to the nucleus. In terms of biological role, plays a role in the inducible expression of cytokine genes in T-cells, especially in the induction of the IL-2 or IL-4 gene transcription. Also controls gene expression in embryonic cardiac cells. Could regulate not only the activation and proliferation but also the differentiation and programmed death of T-lymphocytes as well as lymphoid and non-lymphoid cells. Required for osteoclastogenesis and regulates many genes important for osteoclast differentiation and function. The polypeptide is Nuclear factor of activated T-cells, cytoplasmic 1 (NFATC1) (Sus scrofa (Pig)).